Reading from the N-terminus, the 263-residue chain is tRNA (guanine-N(7)-)-methyltransferase (263 aa).

Positions 1 to 33 (MSDHGRMHSTGSEVAAPVAPDPDTEGVHPHFNR) are disordered. Glu-89, Glu-114, Asp-146, and Asp-169 together coordinate S-adenosyl-L-methionine. The active site involves Asp-169. Substrate-binding positions include Lys-173, Asp-205, and 242 to 245 (TKYE).

This sequence belongs to the class I-like SAM-binding methyltransferase superfamily. TrmB family.

The catalysed reaction is guanosine(46) in tRNA + S-adenosyl-L-methionine = N(7)-methylguanosine(46) in tRNA + S-adenosyl-L-homocysteine. Its pathway is tRNA modification; N(7)-methylguanine-tRNA biosynthesis. Functionally, catalyzes the formation of N(7)-methylguanine at position 46 (m7G46) in tRNA. The polypeptide is tRNA (guanine-N(7)-)-methyltransferase (Mycolicibacterium gilvum (strain PYR-GCK) (Mycobacterium gilvum (strain PYR-GCK))).